A 1215-amino-acid chain; its full sequence is Protein benign gonial cell neoplasm (1215 aa).

One copy of the ANK repeat lies at 407–439 (TGKTAVHFASELNKANHLRLLLFMGADPYIVDL). Threonine 898 carries the phosphothreonine modification.

In terms of assembly, part of a complex composed of at least mei-P26, bam, bgcn and Sxl; this complex is involved in translational repression of nanos mRNA. Interacts with bam (via C-terminus); the interaction is direct. Interacts with mei-P26; the interaction is direct and does not require bam. Weakly interacts with wh/wuho; this interaction may be required for the function or formation of the mei-P26-bgcn-bam-Sxl complex. Part of a complex composed of at least tut, bam and bgcn; complex formation does not require RNA. Interacts with tut; the interaction is indirect and is mediated by bam. As part of the bam-bgcn-tut complex associates with twin; may recruit the CCR4-NOT1 deadenylation complex to mRNA 3'UTRs to mediate post-transcriptional regulation of expression. Expressed in testis and in 5-8 germline stem cells of ovaries, immediately adjacent to terminal filament. Expressed in ovarian germline cells throughout the germarium (at protein level).

In terms of biological role, forms a complex with tut and bam involved in 3'UTR-dependent post-transcriptional repression of several 3'-RNA processing factors, which promotes germline stem cell lineage differentiation and mitosis-to-meiosis transition. Part of a complex with bam involved in 3'-UTR-dependent translational repression of a subset of mRNAs, including those for mei-P26, nanos and shg/E-cadherin; may act as a promiscuous RNA-binding protein tethering bam to its target mRNAs. Required for regulating the progression of gonialblast cells through transit amplification and differentiation into gametes. This chain is Protein benign gonial cell neoplasm, found in Drosophila melanogaster (Fruit fly).